The sequence spans 81 residues: Defensin-like protein b (81 aa).

The N-terminal stretch at 1–26 is a signal peptide; that stretch reads MRNATFFIVFYVFISLVLSNVQDVTA. 4 disulfides stabilise this stretch: cysteine 31–cysteine 81, cysteine 42–cysteine 66, cysteine 50–cysteine 76, and cysteine 64–cysteine 78.

Belongs to the DEFL family. As to expression, expressed in microspores and in young and mature anthers.

Its subcellular location is the secreted. Functionally, involved in self-incompatibility. The sequence is that of Defensin-like protein b (SCRb-1) from Arabidopsis lyrata (Lyre-leaved rock-cress).